The primary structure comprises 241 residues: Host range factor p28 (241 aa).

The KilA-N domain maps to 21 to 131; it reads YIDEPNDIRL…QSILRGLVNW (111 aa). An RING-type zinc finger spans residues 172–225; sequence CGICYEVVYSKRLENDRYFGLLDSCNHIFCITCINIWHRTRRETGASDNCPICR.

Belongs to the orthopoxvirus OPG021 family.

It is found in the host cytoplasm. The enzyme catalyses S-ubiquitinyl-[E2 ubiquitin-conjugating enzyme]-L-cysteine + [acceptor protein]-L-lysine = [E2 ubiquitin-conjugating enzyme]-L-cysteine + N(6)-ubiquitinyl-[acceptor protein]-L-lysine.. RING-finger E3 ubiquitin ligase which catalyzes the formation of both 'Lys-48'- and 'Lys-63'-linked polyubiquitin chains. Plays an important role in virulence by acting as an anti-apoptotic factor. This Ectromelia virus (strain Moscow) (ECTV) protein is Host range factor p28 (OPG021).